The sequence spans 369 residues: tRNA pseudouridine synthase D (369 aa).

The active-site Nucleophile is aspartate 80. The TRUD domain occupies 156–318 (GIPNWFGEQR…LKQERRALRL (163 aa)).

Belongs to the pseudouridine synthase TruD family.

It carries out the reaction uridine(13) in tRNA = pseudouridine(13) in tRNA. In terms of biological role, responsible for synthesis of pseudouridine from uracil-13 in transfer RNAs. This is tRNA pseudouridine synthase D from Xanthomonas oryzae pv. oryzae (strain KACC10331 / KXO85).